An 858-amino-acid chain; its full sequence is Leucine--tRNA ligase (858 aa).

A 'HIGH' region motif is present at residues 42-52 (PYPSGRLHMGH). The 'KMSKS' region motif lies at 618–622 (KMSKS). An ATP-binding site is contributed by lysine 621.

The protein belongs to the class-I aminoacyl-tRNA synthetase family.

It is found in the cytoplasm. The catalysed reaction is tRNA(Leu) + L-leucine + ATP = L-leucyl-tRNA(Leu) + AMP + diphosphate. The polypeptide is Leucine--tRNA ligase (Aliivibrio fischeri (strain MJ11) (Vibrio fischeri)).